A 343-amino-acid polypeptide reads, in one-letter code: F17e-G fimbrial adhesin (343 aa).

Residues 1-22 (MTNFYKVFLAVFILVCCNISHA) form the signal peptide. A receptor-binding lectin domain region spans residues 23 to 199 (AVSFIGSTEN…LNPFTLNDTV (177 aa)). A carbohydrate-binding positions include 65–66 (AN), 110–111 (DT), and 138–141 (STQG). Residues Cys-75 and Cys-132 are joined by a disulfide bond. Residues 200–343 (TSCRLLTPSA…GISTFTFSYQ (144 aa)) are fimbrillin-binding domain. Residues 287-307 (LKFGPDSPVKGNENQWQLSTG) are disordered. Over residues 298-307 (NENQWQLSTG) the composition is skewed to polar residues.

The protein belongs to the fimbrial protein family.

The protein resides in the fimbrium. Functionally, essential fimbrial adhesion factor that mediates binding to N-acetylglucosamine-containing receptors in the host intestinal microvilli, leading to colonization of the intestinal tissue, and diarrhea or septicemia. Also confers adhesiveness to laminin and basement membranes. The chain is F17e-G fimbrial adhesin (f17eG) from Escherichia coli.